Reading from the N-terminus, the 295-residue chain is Glycine--tRNA ligase alpha subunit (295 aa).

Belongs to the class-II aminoacyl-tRNA synthetase family. As to quaternary structure, tetramer of two alpha and two beta subunits.

It localises to the cytoplasm. It carries out the reaction tRNA(Gly) + glycine + ATP = glycyl-tRNA(Gly) + AMP + diphosphate. In Thermosynechococcus vestitus (strain NIES-2133 / IAM M-273 / BP-1), this protein is Glycine--tRNA ligase alpha subunit.